Consider the following 382-residue polypeptide: Mannitol-1-phosphate 5-dehydrogenase (382 aa).

NAD(+) is bound at residue 3–14 (AVHFGAGNIGRG).

The protein belongs to the mannitol dehydrogenase family.

The catalysed reaction is D-mannitol 1-phosphate + NAD(+) = beta-D-fructose 6-phosphate + NADH + H(+). This chain is Mannitol-1-phosphate 5-dehydrogenase, found in Exiguobacterium sp. (strain ATCC BAA-1283 / AT1b).